The chain runs to 667 residues: Alpha-1,4-glucan:maltose-1-phosphate maltosyltransferase (667 aa).

Residues K261, Q321, and D356 each coordinate alpha-maltose 1-phosphate. The Nucleophile role is filled by D392. Residue N393 coordinates alpha-maltose 1-phosphate. E421 (proton donor) is an active-site residue. 534 to 535 (KY) is a binding site for alpha-maltose 1-phosphate.

The protein belongs to the glycosyl hydrolase 13 family. GlgE subfamily. In terms of assembly, homodimer.

The catalysed reaction is alpha-maltose 1-phosphate + [(1-&gt;4)-alpha-D-glucosyl](n) = [(1-&gt;4)-alpha-D-glucosyl](n+2) + phosphate. In terms of biological role, maltosyltransferase that uses maltose 1-phosphate (M1P) as the sugar donor to elongate linear or branched alpha-(1-&gt;4)-glucans. Is involved in a branched alpha-glucan biosynthetic pathway from trehalose, together with TreS, Mak and GlgB. The sequence is that of Alpha-1,4-glucan:maltose-1-phosphate maltosyltransferase from Methylacidiphilum infernorum (isolate V4) (Methylokorus infernorum (strain V4)).